The chain runs to 86 residues: Protein Tat (86 aa).

The interval 1-24 (MEPVDPRLEPWKHPGSQPKTACTN) is interaction with human CREBBP. The segment at 1-48 (MEPVDPRLEPWKHPGSQPKTACTNCYCKKCCFHCQVCFITKALGISYG) is transactivation. Positions 22, 25, and 27 each coordinate Zn(2+). A cysteine-rich region spans residues 22 to 37 (CTNCYCKKCCFHCQVC). At Lys28 the chain carries N6-acetyllysine; by host PCAF. Cys30, His33, Cys34, and Cys37 together coordinate Zn(2+). The core stretch occupies residues 38–48 (FITKALGISYG). Residues 48–58 (GRKKRRQRRRP) are compositionally biased toward basic residues. The segment at 48–86 (GRKKRRQRRRPPQGSQTHQVSLSKQPTSQSRGDPTGPKE) is disordered. A Nuclear localization signal, RNA-binding (TAR), and protein transduction motif is present at residues 49–57 (RKKRRQRRR). Residues 49 to 86 (RKKRRQRRRPPQGSQTHQVSLSKQPTSQSRGDPTGPKE) form an interaction with the host capping enzyme RNGTT region. N6-acetyllysine; by host EP300 and GCN5L2 is present on residues Lys50 and Lys51. Arg52 and Arg53 each carry asymmetric dimethylarginine; by host PRMT6. Residues 62 to 79 (SQTHQVSLSKQPTSQSRG) are compositionally biased toward polar residues. Lys71 is covalently cross-linked (Glycyl lysine isopeptide (Lys-Gly) (interchain with G-Cter in ubiquitin)). Residues 78-80 (RGD) carry the Cell attachment site motif.

It belongs to the lentiviruses Tat family. As to quaternary structure, interacts with host CCNT1. Associates with the P-TEFb complex composed at least of Tat, P-TEFb (CDK9 and CCNT1), TAR RNA, RNA Pol II. Recruits the HATs CREBBP, TAF1/TFIID, EP300, PCAF and GCN5L2. Interacts with host KAT5/Tip60; this interaction targets the latter to degradation. Interacts with the host deacetylase SIRT1. Interacts with host capping enzyme RNGTT; this interaction stimulates RNGTT. Binds to host KDR, and to the host integrins ITGAV/ITGB3 and ITGA5/ITGB1. Interacts with host KPNB1/importin beta-1 without previous binding to KPNA1/importin alpha-1. Interacts with EIF2AK2. Interacts with host nucleosome assembly protein NAP1L1; this interaction may be required for the transport of Tat within the nucleus, since the two proteins interact at the nuclear rim. Interacts with host C1QBP/SF2P32; this interaction involves lysine-acetylated Tat. Interacts with the host chemokine receptors CCR2, CCR3 and CXCR4. Interacts with host DPP4/CD26; this interaction may trigger an anti-proliferative effect. Interacts with host LDLR. Interacts with the host extracellular matrix metalloproteinase MMP1. Interacts with host PRMT6; this interaction mediates Tat's methylation. Interacts with, and is ubiquitinated by MDM2/Hdm2. Interacts with host PSMC3 and HTATIP2. Interacts with STAB1; this interaction may overcome SATB1-mediated repression of IL2 and IL2RA (interleukin) in T cells by binding to the same domain than HDAC1. Interacts (when acetylated) with human CDK13, thereby increasing HIV-1 mRNA splicing and promoting the production of the doubly spliced HIV-1 protein Nef. Interacts with host TBP; this interaction modulates the activity of transcriptional pre-initiation complex. Interacts with host RELA. Interacts with host PLSCR1; this interaction negatively regulates Tat transactivation activity by altering its subcellular distribution. Asymmetrical arginine methylation by host PRMT6 seems to diminish the transactivation capacity of Tat and affects the interaction with host CCNT1. Post-translationally, acetylation by EP300, CREBBP, GCN5L2/GCN5 and PCAF regulates the transactivation activity of Tat. EP300-mediated acetylation of Lys-50 promotes dissociation of Tat from the TAR RNA through the competitive binding to PCAF's bromodomain. In addition, the non-acetylated Tat's N-terminus can also interact with PCAF. PCAF-mediated acetylation of Lys-28 enhances Tat's binding to CCNT1. Lys-50 is deacetylated by SIRT1. In terms of processing, polyubiquitination by host MDM2 does not target Tat to degradation, but activates its transactivation function and fosters interaction with CCNT1 and TAR RNA. Phosphorylated by EIF2AK2 on serine and threonine residues adjacent to the basic region important for TAR RNA binding and function. Phosphorylation of Tat by EIF2AK2 is dependent on the prior activation of EIF2AK2 by dsRNA.

Its subcellular location is the host nucleus. It localises to the host nucleolus. The protein localises to the host cytoplasm. It is found in the secreted. Its function is as follows. Transcriptional activator that increases RNA Pol II processivity, thereby increasing the level of full-length viral transcripts. Recognizes a hairpin structure at the 5'-LTR of the nascent viral mRNAs referred to as the transactivation responsive RNA element (TAR) and recruits the cyclin T1-CDK9 complex (P-TEFb complex) that will in turn hyperphosphorylate the RNA polymerase II to allow efficient elongation. The CDK9 component of P-TEFb and other Tat-activated kinases hyperphosphorylate the C-terminus of RNA Pol II that becomes stabilized and much more processive. Other factors such as HTATSF1/Tat-SF1, SUPT5H/SPT5, and HTATIP2 are also important for Tat's function. Besides its effect on RNA Pol II processivity, Tat induces chromatin remodeling of proviral genes by recruiting the histone acetyltransferases (HATs) CREBBP, EP300 and PCAF to the chromatin. This also contributes to the increase in proviral transcription rate, especially when the provirus integrates in transcriptionally silent region of the host genome. To ensure maximal activation of the LTR, Tat mediates nuclear translocation of NF-kappa-B by interacting with host RELA. Through its interaction with host TBP, Tat may also modulate transcription initiation. Tat can reactivate a latently infected cell by penetrating in it and transactivating its LTR promoter. In the cytoplasm, Tat is thought to act as a translational activator of HIV-1 mRNAs. Functionally, extracellular circulating Tat can be endocytosed by surrounding uninfected cells via the binding to several surface receptors such as CD26, CXCR4, heparan sulfate proteoglycans (HSPG) or LDLR. Neurons are rarely infected, but they internalize Tat via their LDLR. Through its interaction with nuclear HATs, Tat is potentially able to control the acetylation-dependent cellular gene expression. Modulates the expression of many cellular genes involved in cell survival, proliferation or in coding for cytokines or cytokine receptors. Tat plays a role in T-cell and neurons apoptosis. Tat induced neurotoxicity and apoptosis probably contribute to neuroAIDS. Circulating Tat also acts as a chemokine-like and/or growth factor-like molecule that binds to specific receptors on the surface of the cells, affecting many cellular pathways. In the vascular system, Tat binds to ITGAV/ITGB3 and ITGA5/ITGB1 integrins dimers at the surface of endothelial cells and competes with bFGF for heparin-binding sites, leading to an excess of soluble bFGF. The sequence is that of Protein Tat from Homo sapiens (Human).